The sequence spans 373 residues: MLIPFSMKNCFQLLCNLKVPAAGFKNTVKSGLILQSISNDVYHNLAVEDWIHDHMNLEGKPVLFLWRNSPTVVIGRHQNPWQECNLNLMREEGVKLARRRSGGGTVYHDMGNINLTFFTTKKKYDRMENLKLVVRALKAVHPHLDVQATKRFDLLLDGQFKISGTASKIGRNAAYHHCTLLCGTDGTFLSSLLKSPYQGIRSNATASTPALVKNLMEKDPTLTCEVVINAVATEYATSHQIDNHIHLINPTDETVFPGINSKAIELQTWEWIYGKTPKFSVDTSFTVLHEQSHVEIKVFIDVKNGRIEVCNIEAPDHWLPLEICDQLNSSLIGSKFSPIETTVLTSILHRTYPGDDELHSKWNILCEKIKGIM.

A mitochondrion-targeting transit peptide spans 1-25; sequence MLIPFSMKNCFQLLCNLKVPAAGFK. A BPL/LPL catalytic domain is found at 57–243; the sequence is LEGKPVLFLW…EYATSHQIDN (187 aa). Residues tyrosine 107, arginine 151, lysine 161, threonine 179, threonine 208, and alanine 210 each coordinate (R)-lipoyl-5'-AMP.

The protein belongs to the LplA family.

It is found in the mitochondrion. It catalyses the reaction N(6)-[(R)-lipoyl]-L-lysyl-[glycine-cleavage complex H protein] + L-lysyl-[lipoyl-carrier protein] = L-lysyl-[glycine-cleavage complex H protein] + N(6)-[(R)-lipoyl]-L-lysyl-[lipoyl-carrier protein]. The enzyme catalyses (R)-lipoyl-5'-AMP + L-lysyl-[lipoyl-carrier protein] = N(6)-[(R)-lipoyl]-L-lysyl-[lipoyl-carrier protein] + AMP + 2 H(+). The protein operates within protein modification; protein lipoylation via exogenous pathway; protein N(6)-(lipoyl)lysine from lipoate: step 2/2. With respect to regulation, inhibited by lipoyl-AMP analogs including hexanoyl-, octanoyl- and decanoyl-AMP. Its function is as follows. Lipoyl amidotransferase that catalyzes the transfer of lipoyl moieties from lipoyl-protein H of the glycine cleavage system (lipoyl-GCSH) to E2 subunits of the pyruvate dehydrogenase complex (PDCE2). Unable to catalyze the transfer of octanoyl from octanoyl-GCSH to PDCE2. In vitro, it is also able to catalyze the transfer of the lipoyl group from lipoyl-AMP to the specific lysine residue of lipoyl domains of lipoate-dependent enzymes but this reaction may not be physiologically relevant. The chain is Lipoyl amidotransferase LIPT1, mitochondrial (LIPT1) from Bos taurus (Bovine).